The chain runs to 187 residues: RNA 2',3'-cyclic phosphodiesterase (187 aa).

His-40 serves as the catalytic Proton donor. Short sequence motifs (HXTX) lie at residues 40–43 (HLTL) and 125–128 (HITI). The Proton acceptor role is filled by His-125.

Belongs to the 2H phosphoesterase superfamily. ThpR family.

The enzyme catalyses a 3'-end 2',3'-cyclophospho-ribonucleotide-RNA + H2O = a 3'-end 2'-phospho-ribonucleotide-RNA + H(+). Hydrolyzes RNA 2',3'-cyclic phosphodiester to an RNA 2'-phosphomonoester. The chain is RNA 2',3'-cyclic phosphodiesterase from Thermotoga maritima (strain ATCC 43589 / DSM 3109 / JCM 10099 / NBRC 100826 / MSB8).